The primary structure comprises 230 residues: Cysteine S-methyltransferase OspZ (230 aa).

The tract at residues 49–52 (GITR) is interaction with host proteins TAB2, TAB3 and ZRANB3. Alanine 92, serine 98, arginine 107, glutamine 111, tyrosine 204, and glutamate 208 together coordinate S-adenosyl-L-methionine.

This sequence belongs to the NleE/OspZ family. Monomer.

Its subcellular location is the secreted. The protein resides in the host cytoplasm. The protein localises to the host nucleus. The catalysed reaction is L-cysteinyl-[protein] + S-adenosyl-L-methionine = S-methyl-L-cysteinyl-[protein] + S-adenosyl-L-homocysteine + H(+). Its function is as follows. Cysteine methyltransferase effector that inhibits host cell NF-kappa-B activation by preventing nuclear translocation of host protein RELA/p65. Acts by mediating cysteine methylation of host proteins TAB2 and TAB3: methylation of a conserved cysteine residue of the RanBP2-type zinc finger (NZF) of TAB2 and TAB3 disrupts zinc-binding, thereby inactivating the ubiquitin chain-binding activity of TAB2 and TAB3, leading to NF-kappa-B inactivation. Also mediates cysteine methylation of host protein ZRANB3, inactivating its ability to bind ubiquitin chains. This chain is Cysteine S-methyltransferase OspZ, found in Shigella flexneri.